Consider the following 291-residue polypeptide: 4-hydroxy-tetrahydrodipicolinate synthase (291 aa).

Residue Thr-44 participates in pyruvate binding. Tyr-132 (proton donor/acceptor) is an active-site residue. The active-site Schiff-base intermediate with substrate is the Lys-160. Val-202 lines the pyruvate pocket.

The protein belongs to the DapA family. In terms of assembly, homotetramer; dimer of dimers.

The protein localises to the cytoplasm. The catalysed reaction is L-aspartate 4-semialdehyde + pyruvate = (2S,4S)-4-hydroxy-2,3,4,5-tetrahydrodipicolinate + H2O + H(+). It functions in the pathway amino-acid biosynthesis; L-lysine biosynthesis via DAP pathway; (S)-tetrahydrodipicolinate from L-aspartate: step 3/4. Its function is as follows. Catalyzes the condensation of (S)-aspartate-beta-semialdehyde [(S)-ASA] and pyruvate to 4-hydroxy-tetrahydrodipicolinate (HTPA). The chain is 4-hydroxy-tetrahydrodipicolinate synthase from Clostridium perfringens (strain 13 / Type A).